We begin with the raw amino-acid sequence, 132 residues long: Small ribosomal subunit protein uS8 (132 aa).

The protein belongs to the universal ribosomal protein uS8 family. Part of the 30S ribosomal subunit. Contacts proteins S5 and S12.

Its function is as follows. One of the primary rRNA binding proteins, it binds directly to 16S rRNA central domain where it helps coordinate assembly of the platform of the 30S subunit. In Geotalea daltonii (strain DSM 22248 / JCM 15807 / FRC-32) (Geobacter daltonii), this protein is Small ribosomal subunit protein uS8.